Reading from the N-terminus, the 249-residue chain is 5'-nucleotidase SurE (249 aa).

A divalent metal cation is bound by residues Asp-9, Asp-10, Ser-40, and Asn-92.

This sequence belongs to the SurE nucleotidase family. It depends on a divalent metal cation as a cofactor.

Its subcellular location is the cytoplasm. It catalyses the reaction a ribonucleoside 5'-phosphate + H2O = a ribonucleoside + phosphate. Nucleotidase that shows phosphatase activity on nucleoside 5'-monophosphates. The protein is 5'-nucleotidase SurE of Shewanella baltica (strain OS195).